We begin with the raw amino-acid sequence, 121 residues long: SVLELGKMILQETGKNAITSYGSYGCNCGWGHRGQPKDATDRCCFVHKCCYKKLTDCNHKTDRYSYSWKNKAIICEEKNPCLKEMCECDKAVAICLRENLDTYNKKYKAYFKLKCKKPDTC.

7 disulfides stabilise this stretch: Cys-26-Cys-115, Cys-28-Cys-44, Cys-43-Cys-95, Cys-49-Cys-121, Cys-50-Cys-88, Cys-57-Cys-81, and Cys-75-Cys-86. The tract at residues 105-117 (KKYKAYFKLKCKK) is important for membrane-damaging activities in eukaryotes and bacteria; heparin-binding.

It belongs to the phospholipase A2 family. Group II subfamily. K49 sub-subfamily. Monomer. As to expression, expressed by the venom gland.

It is found in the secreted. Functionally, snake venom phospholipase A2 (PLA2) that lacks enzymatic activity. Displays edema-inducing activities. Is myotoxic. A model of myotoxic mechanism has been proposed: an apo Lys49-PLA2 is activated by the entrance of a hydrophobic molecule (e.g. fatty acid) at the hydrophobic channel of the protein leading to a reorientation of a monomer. This reorientation causes a transition between 'inactive' to 'active' states, causing alignment of C-terminal and membrane-docking sites (MDoS) side-by-side and putting the membrane-disruption sites (MDiS) in the same plane, exposed to solvent and in a symmetric position for both monomers. The MDoS region stabilizes the toxin on membrane by the interaction of charged residues with phospholipid head groups. Subsequently, the MDiS region destabilizes the membrane with penetration of hydrophobic residues. This insertion causes a disorganization of the membrane, allowing an uncontrolled influx of ions (i.e. calcium and sodium), and eventually triggering irreversible intracellular alterations and cell death. This is Basic phospholipase A2 homolog AppP2 from Agkistrodon piscivorus piscivorus (Eastern cottonmouth).